Consider the following 69-residue polypeptide: VLIIAVLFLTACQLTTAETYPRGQQRHHALRSTDKNSKLTRGCTPRNGACGYHSHCCSNFCHTWANVCL.

An N-terminal signal peptide occupies residues valine 1 to alanine 17. A propeptide spanning residues glutamate 18–threonine 40 is cleaved from the precursor. 3 cysteine pairs are disulfide-bonded: cysteine 43/cysteine 57, cysteine 50/cysteine 61, and cysteine 56/cysteine 68.

This sequence belongs to the conotoxin O1 superfamily. In terms of tissue distribution, expressed by the venom duct.

The protein localises to the secreted. The chain is Conotoxin LvVID from Conus lividus (Livid cone).